The sequence spans 560 residues: Phenol regulator MopR (560 aa).

Residues histidine 106 and tryptophan 134 each contribute to the phenol site. 4 residues coordinate Zn(2+): cysteine 155, glutamate 178, cysteine 181, and cysteine 189. Residues 245 to 474 form the Sigma-54 factor interaction domain; the sequence is AVGESVAYRK…LENLLERATL (230 aa). ATP-binding positions include 273-280 and 336-345; these read GETGVGKE and AHGGTIFLDE.

Homodimer.

Activity is triggered by phenol binding. Involved in the regulation of the phenol degradation pathway. Activates phenol hydroxylase expression in the presence of phenol. This is Phenol regulator MopR from Acinetobacter guillouiae (Acinetobacter genomosp. 11).